A 275-amino-acid chain; its full sequence is Large ribosomal subunit protein uL2 (275 aa).

Residues 225–275 (MNPVDHPHGGGEGRSPIGRPPVTPWGKPALGTRTRNKKKASSKLIVKRRTK) are disordered. Positions 258 to 275 (TRNKKKASSKLIVKRRTK) are enriched in basic residues.

Belongs to the universal ribosomal protein uL2 family. In terms of assembly, part of the 50S ribosomal subunit. Forms a bridge to the 30S subunit in the 70S ribosome.

One of the primary rRNA binding proteins. Required for association of the 30S and 50S subunits to form the 70S ribosome, for tRNA binding and peptide bond formation. It has been suggested to have peptidyltransferase activity; this is somewhat controversial. Makes several contacts with the 16S rRNA in the 70S ribosome. The polypeptide is Large ribosomal subunit protein uL2 (Desulforudis audaxviator (strain MP104C)).